The sequence spans 160 residues: 6,7-dimethyl-8-ribityllumazine synthase (160 aa).

5-amino-6-(D-ribitylamino)uracil contacts are provided by residues tryptophan 27, alanine 59 to glutamate 61, and valine 81 to isoleucine 83. Glutamine 86 to threonine 87 serves as a coordination point for (2S)-2-hydroxy-3-oxobutyl phosphate. Histidine 89 acts as the Proton donor in catalysis. Position 114 (asparagine 114) interacts with 5-amino-6-(D-ribitylamino)uracil. Arginine 128 is a binding site for (2S)-2-hydroxy-3-oxobutyl phosphate.

Belongs to the DMRL synthase family. As to quaternary structure, homopentamer.

The enzyme catalyses (2S)-2-hydroxy-3-oxobutyl phosphate + 5-amino-6-(D-ribitylamino)uracil = 6,7-dimethyl-8-(1-D-ribityl)lumazine + phosphate + 2 H2O + H(+). The protein operates within cofactor biosynthesis; riboflavin biosynthesis; riboflavin from 2-hydroxy-3-oxobutyl phosphate and 5-amino-6-(D-ribitylamino)uracil: step 1/2. Functionally, catalyzes the formation of 6,7-dimethyl-8-ribityllumazine by condensation of 5-amino-6-(D-ribitylamino)uracil with 3,4-dihydroxy-2-butanone 4-phosphate. This is the penultimate step in the biosynthesis of riboflavin. This is 6,7-dimethyl-8-ribityllumazine synthase from Mycobacterium avium (strain 104).